A 148-amino-acid chain; its full sequence is Photosystem I reaction center subunit XI (148 aa).

The next 3 membrane-spanning stretches (helical) occupy residues 48–68 (LEIG…LGPL), 73–93 (IGLL…TLGL), and 122–142 (GGFF…LSSI).

The protein belongs to the PsaL family.

It localises to the plastid. The protein localises to the chloroplast thylakoid membrane. In Thalassiosira pseudonana (Marine diatom), this protein is Photosystem I reaction center subunit XI.